Consider the following 231-residue polypeptide: Lecithin retinol acyltransferase (231 aa).

Topologically, residues 1 to 194 (MKNPMLEAAS…VKIIIRDQRS (194 aa)) are cytoplasmic. The 128-residue stretch at 50 to 177 (VLEVSRTHFI…CRYGSRISPQ (128 aa)) folds into the LRAT domain. Residues H60 and H72 contribute to the active site. The Acyl-thioester intermediate role is filled by C161. A helical membrane pass occupies residues 195–215 (SLASAVLGLASIVYTGLASYM). Residues 216-231 (TLPAICIPFCLWMMSG) are Lumenal-facing.

The protein belongs to the H-rev107 family. In terms of tissue distribution, hepatic stellate cells and endothelial cells (at protein level).

Its subcellular location is the endoplasmic reticulum membrane. It is found in the rough endoplasmic reticulum. The protein localises to the endosome. It localises to the multivesicular body. The protein resides in the cytoplasm. Its subcellular location is the perinuclear region. The catalysed reaction is all-trans-retinol--[retinol-binding protein] + a 1,2-diacyl-sn-glycero-3-phosphocholine = apo--[retinol-binding protein] + an all-trans-retinyl ester + a 2-acyl-sn-glycero-3-phosphocholine. The enzyme catalyses 1,2-diheptanoyl-sn-glycero-3-phosphocholine + all-trans-retinol--[retinol-binding protein] = all-trans-retinyl heptanoate + 2-heptanoyl-sn-glycero-3-phosphocholine + apo--[retinol-binding protein]. It catalyses the reaction 1,2-dioctanoyl-sn-glycero-3-phosphocholine + all-trans-retinol--[retinol-binding protein] = 2-octanoyl-sn-glycero-3-phosphocholine + all-trans-retinyl octanoate + apo--[retinol-binding protein]. It carries out the reaction all-trans-retinol--[retinol-binding protein] + 1,2-dihexadecanoyl-sn-glycero-3-phosphocholine = apo--[retinol-binding protein] + all-trans-retinyl hexadecanoate + 2-hexadecanoyl-sn-glycero-3-phosphocholine. The catalysed reaction is 1,2-didodecanoyl-sn-glycero-3-phosphocholine + all-trans-retinol--[retinol-binding protein] = 2-dodecanoyl-sn-glycero-3-phosphocholine + all-trans-retinyl dodecanoate + apo--[retinol-binding protein]. The enzyme catalyses 1,2-dihexadecanoyl-sn-glycero-3-phosphocholine + all-trans-retinol = all-trans-retinyl hexadecanoate + 2-hexadecanoyl-sn-glycero-3-phosphocholine. It functions in the pathway cofactor metabolism; retinol metabolism. With respect to regulation, inhibited by all-trans-retinyl alpha-bromoacetate and N-boc-L-biocytinyl-11-aminoundecane chloro-methyl ketone (BACMK). Transfers the acyl group from the sn-1 position of phosphatidylcholine to all-trans retinol, producing all-trans retinyl esters. Retinyl esters are storage forms of vitamin A. LRAT plays a critical role in vision. It provides the all-trans retinyl ester substrates for the isomerohydrolase which processes the esters into 11-cis-retinol in the retinal pigment epithelium; due to a membrane-associated alcohol dehydrogenase, 11 cis-retinol is oxidized and converted into 11-cis-retinaldehyde which is the chromophore for rhodopsin and the cone photopigments. Required for the survival of cone photoreceptors and correct rod photoreceptor cell morphology. This Mus musculus (Mouse) protein is Lecithin retinol acyltransferase (Lrat).